We begin with the raw amino-acid sequence, 399 residues long: Glutathione-independent formaldehyde dehydrogenase (399 aa).

Cysteine 47 provides a ligand contact to Zn(2+). NAD(+) is bound by residues glycine 48, serine 49, and histidine 52. Zn(2+) contacts are provided by histidine 68, cysteine 98, cysteine 101, cysteine 104, cysteine 112, and aspartate 170. Residues valine 198, aspartate 218, arginine 223, valine 263, arginine 268, histidine 270, proline 300, leucine 302, glycine 337, and threonine 339 each coordinate NAD(+).

Belongs to the zinc-containing alcohol dehydrogenase family. In terms of assembly, homotetramer. The cofactor is Zn(2+).

The catalysed reaction is formaldehyde + NAD(+) + H2O = formate + NADH + 2 H(+). It catalyses the reaction acetaldehyde + NAD(+) + H2O = acetate + NADH + 2 H(+). The enzyme catalyses 2 formaldehyde + H2O = methanol + formate + H(+). Its activity is regulated as follows. Inactivated by bipyridine and p-chloromercuribenzoate. Functionally, dehydrogenase that catalyzes the NAD(+)-dependent oxidation of formaldehyde and acetaldehyde, and, to a lesser extent, long-chain alcohols, but is inactive against propionaldehyde, butyraldehyde, methanol and ethanol. Can also catalyze the dismutation of a wide range of aldehydes such as formaldehyde. This Pseudomonas putida (Arthrobacter siderocapsulatus) protein is Glutathione-independent formaldehyde dehydrogenase.